The following is a 1258-amino-acid chain: Cohesin subunit SA-1 (1258 aa).

The tract at residues 1-59 (MITSELPVLQDSTNETTAHSDAGSELEETEVKGKRKRGRPGRPPSTNKKPRKSPGEKSR) is disordered. Over residues 10–19 (QDSTNETTAH) the composition is skewed to polar residues. S24 carries the phosphoserine modification. The region spanning 296–381 (FVHRYRDAIA…NRFKDRIVSM (86 aa)) is the SCD domain. Residues S756, S1062, and S1065 each carry the phosphoserine modification. A disordered region spans residues 1055–1148 (GGEDDRMSVN…EHGSEPDFLH (94 aa)). The span at 1062–1075 (SVNSGSSSSKTSSV) shows a compositional bias: low complexity. Basic residues predominate over residues 1076-1087 (RSKKGRPPLHRK). S1093 is subject to Phosphoserine. Positions 1095 to 1106 (DNTWLNRTDTMI) are enriched in polar residues. A compositionally biased stretch (basic and acidic residues) spans 1137–1146 (ESEHGSEPDF). Residue K1161 forms a Glycyl lysine isopeptide (Lys-Gly) (interchain with G-Cter in SUMO2) linkage.

Belongs to the SCC3 family. As to quaternary structure, cohesin complexes are composed of a heterodimer between a SMC1 protein (SMC1A or SMC1B) and SMC3, which are attached via their hinge domain, and RAD21 which link them at their heads, and one STAG protein (STAG1, STAG2 or STAG3). In cohesin complexes, STAG1 is mutually exclusive with STAG2 and STAG3. Interacts directly with RAD21 in cohesin complex. The cohesin complex interacts with the cohesin loading complex subunits NIPBL/Scc2 (via HEAT repeats) and MAU2/Scc4. NIPBL directly contacts all members of the complex, RAD21, SMC1A/B, SMC3 and STAG1. Post-translationally, phosphorylated by PLK1. The large dissociation of cohesin from chromosome arms during prophase is partly due to its phosphorylation.

It localises to the nucleus. Its subcellular location is the chromosome. Component of cohesin complex, a complex required for the cohesion of sister chromatids after DNA replication. The cohesin complex apparently forms a large proteinaceous ring within which sister chromatids can be trapped. At anaphase, the complex is cleaved and dissociates from chromatin, allowing sister chromatids to segregate. The cohesin complex may also play a role in spindle pole assembly during mitosis. This Mus musculus (Mouse) protein is Cohesin subunit SA-1 (Stag1).